Reading from the N-terminus, the 477-residue chain is Lactate utilization protein B (477 aa).

2 consecutive 4Fe-4S ferredoxin-type domains span residues 304-334 (GTEFQSVLQCIRCAACINVCPVYRHVGGHSY) and 353-382 (YDDYKELPYASSLCAACSEACPVKIPLHEL). C313, C316, C319, C323, C366, C369, and C373 together coordinate [4Fe-4S] cluster. The segment at 433–477 (KEDGKITKGPGPLKQWTQIRDFPAPNKSRFRDWFEDRRKEKGEDK) is disordered. Residues 461–477 (RFRDWFEDRRKEKGEDK) show a composition bias toward basic and acidic residues.

It belongs to the LutB/YkgF family.

Is involved in L-lactate degradation and allows cells to grow with lactate as the sole carbon source. Has probably a role as an electron transporter during oxidation of L-lactate. The sequence is that of Lactate utilization protein B from Bacillus licheniformis (strain ATCC 14580 / DSM 13 / JCM 2505 / CCUG 7422 / NBRC 12200 / NCIMB 9375 / NCTC 10341 / NRRL NRS-1264 / Gibson 46).